The following is a 410-amino-acid chain: Histone-lysine N-methyltransferase SUV39H2 (410 aa).

One can recognise a Chromo domain in the interval 47–105 (YEVEYLCDYKVVKDMEYYLVKWKGWPDSTNTWEPLQNLKCPLLLQQFSNDKHNYLSQVK). The region spanning 189–247 (FGCSCTDCFFQKCCPAEAGVLLAYNKNQQIKIPPGTPIYECNSRCQCGPDCPNRIVQKG) is the Pre-SET domain. Residues Cys-191, Cys-193, Cys-196, Cys-201, Cys-202, Cys-229, Cys-233, Cys-235, and Cys-239 each coordinate Zn(2+). The region spanning 250 to 373 (YSLCIFRTSN…AGEELTFDYQ (124 aa)) is the SET domain. Residues 261 to 263 (RGW) and 330 to 331 (NH) each bind S-adenosyl-L-methionine. Cys-333 contributes to the Zn(2+) binding site. An S-adenosyl-L-methionine-binding site is contributed by Tyr-372. Residues Ser-381, Ser-384, and Ser-388 each carry the phosphoserine modification. One can recognise a Post-SET domain in the interval 394-410 (VRTVCKCGAVTCRGYLN). Cys-398 lines the Zn(2+) pocket. An S-adenosyl-L-methionine-binding site is contributed by Lys-399. Positions 400 and 405 each coordinate Zn(2+).

It belongs to the class V-like SAM-binding methyltransferase superfamily. Histone-lysine methyltransferase family. Suvar3-9 subfamily. Interacts with SMAD5. The large PER complex involved in the histone methylation is composed of at least PER2, CBX3, TRIM28, SUV39H1 and/or SUV39H2; CBX3 mediates the formation of the complex. Post-translationally, ubiquitinated by the DCX(DCAF13) E3 ubiquitin ligase complex, leading to its degradation.

It is found in the nucleus. It localises to the chromosome. The protein resides in the centromere. It catalyses the reaction L-lysyl(9)-[histone H3] + 3 S-adenosyl-L-methionine = N(6),N(6),N(6)-trimethyl-L-lysyl(9)-[histone H3] + 3 S-adenosyl-L-homocysteine + 3 H(+). Histone methyltransferase that specifically trimethylates 'Lys-9' of histone H3 using monomethylated H3 'Lys-9' as substrate. H3 'Lys-9' trimethylation represents a specific tag for epigenetic transcriptional repression by recruiting HP1 (CBX1, CBX3 and/or CBX5) proteins to methylated histones. Mainly functions in heterochromatin regions, thereby playing a central role in the establishment of constitutive heterochromatin at pericentric and telomere regions. H3 'Lys-9' trimethylation is also required to direct DNA methylation at pericentric repeats. SUV39H1 is targeted to histone H3 via its interaction with RB1 and is involved in many processes, such as cell cycle regulation, transcriptional repression and regulation of telomere length. May participate in regulation of higher-order chromatin organization during spermatogenesis. Recruited by the large PER complex to the E-box elements of the circadian target genes such as PER2 itself or PER1, contributes to the conversion of local chromatin to a heterochromatin-like repressive state through H3 'Lys-9' trimethylation. The chain is Histone-lysine N-methyltransferase SUV39H2 (SUV39H2) from Homo sapiens (Human).